A 248-amino-acid chain; its full sequence is Pyridoxine 5'-phosphate synthase (248 aa).

Position 12 (Asn12) interacts with 3-amino-2-oxopropyl phosphate. 14–15 (DH) serves as a coordination point for 1-deoxy-D-xylulose 5-phosphate. A 3-amino-2-oxopropyl phosphate-binding site is contributed by Arg23. The active-site Proton acceptor is the His48. 2 residues coordinate 1-deoxy-D-xylulose 5-phosphate: Arg50 and His55. The active-site Proton acceptor is Glu75. Thr105 provides a ligand contact to 1-deoxy-D-xylulose 5-phosphate. Residue His196 is the Proton donor of the active site. Residues Gly197 and 218-219 (GH) each bind 3-amino-2-oxopropyl phosphate.

Belongs to the PNP synthase family. As to quaternary structure, homooctamer; tetramer of dimers.

The protein resides in the cytoplasm. It carries out the reaction 3-amino-2-oxopropyl phosphate + 1-deoxy-D-xylulose 5-phosphate = pyridoxine 5'-phosphate + phosphate + 2 H2O + H(+). The protein operates within cofactor biosynthesis; pyridoxine 5'-phosphate biosynthesis; pyridoxine 5'-phosphate from D-erythrose 4-phosphate: step 5/5. Its function is as follows. Catalyzes the complicated ring closure reaction between the two acyclic compounds 1-deoxy-D-xylulose-5-phosphate (DXP) and 3-amino-2-oxopropyl phosphate (1-amino-acetone-3-phosphate or AAP) to form pyridoxine 5'-phosphate (PNP) and inorganic phosphate. The sequence is that of Pyridoxine 5'-phosphate synthase from Ectopseudomonas mendocina (strain ymp) (Pseudomonas mendocina).